The chain runs to 103 residues: Acylphosphatase-2 (103 aa).

S2 carries the N-acetylserine modification. The 91-residue stretch at 13–103 folds into the Acylphosphatase-like domain; sequence SVDYEVFGRV…LDFSGFSTRY (91 aa). Active-site residues include R28 and N46.

The protein belongs to the acylphosphatase family.

The enzyme catalyses an acyl phosphate + H2O = a carboxylate + phosphate + H(+). Its function is as follows. Its physiological role is not yet clear. In Anas platyrhynchos (Mallard), this protein is Acylphosphatase-2 (ACYP2).